A 249-amino-acid chain; its full sequence is DNA repair protein RecO (249 aa).

The protein belongs to the RecO family.

Involved in DNA repair and RecF pathway recombination. This Rhodopseudomonas palustris (strain BisB5) protein is DNA repair protein RecO.